We begin with the raw amino-acid sequence, 259 residues long: GTP cyclohydrolase FolE2 (259 aa).

It belongs to the GTP cyclohydrolase IV family.

It carries out the reaction GTP + H2O = 7,8-dihydroneopterin 3'-triphosphate + formate + H(+). It participates in cofactor biosynthesis; 7,8-dihydroneopterin triphosphate biosynthesis; 7,8-dihydroneopterin triphosphate from GTP: step 1/1. Functionally, converts GTP to 7,8-dihydroneopterin triphosphate. The sequence is that of GTP cyclohydrolase FolE2 from Halorhodospira halophila (strain DSM 244 / SL1) (Ectothiorhodospira halophila (strain DSM 244 / SL1)).